We begin with the raw amino-acid sequence, 916 residues long: RNA-directed DNA polymerase from mobile element jockey (916 aa).

The 275-residue stretch at 483–757 folds into the Reverse transcriptase domain; that stretch reads SILRVGYFPK…HEYKYLGVIL (275 aa). The interval 890–916 is disordered; sequence RSASPRSRVRRRLKRHHPQDLLDRALT. A compositionally biased stretch (basic residues) spans 896–906; that stretch reads SRVRRRLKRHH. The segment covering 907-916 has biased composition (basic and acidic residues); the sequence is PQDLLDRALT.

Requires Mg(2+) as cofactor. Mn(2+) serves as cofactor.

The catalysed reaction is DNA(n) + a 2'-deoxyribonucleoside 5'-triphosphate = DNA(n+1) + diphosphate. With respect to regulation, inactivated by sulphydryl reagent. This Drosophila funebris (Fruit fly) protein is RNA-directed DNA polymerase from mobile element jockey (jockey\pol).